The following is a 466-amino-acid chain: Cysteine--tRNA ligase (466 aa).

C28 contacts Zn(2+). The short motif at P30–N40 is the 'HIGH' region element. 3 residues coordinate Zn(2+): C208, H233, and E237. A 'KMSKS' region motif is present at residues K265 to S269. K268 is a binding site for ATP.

This sequence belongs to the class-I aminoacyl-tRNA synthetase family. Monomer. It depends on Zn(2+) as a cofactor.

Its subcellular location is the cytoplasm. The enzyme catalyses tRNA(Cys) + L-cysteine + ATP = L-cysteinyl-tRNA(Cys) + AMP + diphosphate. The polypeptide is Cysteine--tRNA ligase (Staphylococcus epidermidis (strain ATCC 35984 / DSM 28319 / BCRC 17069 / CCUG 31568 / BM 3577 / RP62A)).